The primary structure comprises 449 residues: Tubulin beta chain (449 aa).

GTP is bound by residues glutamine 11, glutamate 69, serine 138, glycine 142, threonine 143, glycine 144, asparagine 204, and asparagine 226. Glutamate 69 lines the Mg(2+) pocket. Positions glutamine 426–alanine 449 are disordered. Over residues threonine 429 to methionine 443 the composition is skewed to acidic residues.

Belongs to the tubulin family. In terms of assembly, dimer of alpha and beta chains. A typical microtubule is a hollow water-filled tube with an outer diameter of 25 nm and an inner diameter of 15 nM. Alpha-beta heterodimers associate head-to-tail to form protofilaments running lengthwise along the microtubule wall with the beta-tubulin subunit facing the microtubule plus end conferring a structural polarity. Microtubules usually have 13 protofilaments but different protofilament numbers can be found in some organisms and specialized cells. Mg(2+) serves as cofactor.

The protein resides in the cytoplasm. It is found in the cytoskeleton. Tubulin is the major constituent of microtubules, a cylinder consisting of laterally associated linear protofilaments composed of alpha- and beta-tubulin heterodimers. Microtubules grow by the addition of GTP-tubulin dimers to the microtubule end, where a stabilizing cap forms. Below the cap, tubulin dimers are in GDP-bound state, owing to GTPase activity of alpha-tubulin. This is Tubulin beta chain from Eimeria tenella (Coccidian parasite).